A 215-amino-acid chain; its full sequence is Urease accessory protein UreG (215 aa).

11 to 18 (GPVGAGKS) contributes to the GTP binding site.

The protein belongs to the SIMIBI class G3E GTPase family. UreG subfamily. In terms of assembly, homodimer. UreD, UreF and UreG form a complex that acts as a GTP-hydrolysis-dependent molecular chaperone, activating the urease apoprotein by helping to assemble the nickel containing metallocenter of UreC. The UreE protein probably delivers the nickel.

The protein resides in the cytoplasm. Facilitates the functional incorporation of the urease nickel metallocenter. This process requires GTP hydrolysis, probably effectuated by UreG. In Cenarchaeum symbiosum (strain A), this protein is Urease accessory protein UreG.